Consider the following 436-residue polypeptide: 3-ketoacyl-CoA thiolase (436 aa).

Cysteine 99 (acyl-thioester intermediate) is an active-site residue. Catalysis depends on proton acceptor residues histidine 392 and cysteine 422.

It belongs to the thiolase-like superfamily. Thiolase family. As to quaternary structure, heterotetramer of two alpha chains (FadJ) and two beta chains (FadI).

It localises to the cytoplasm. It catalyses the reaction an acyl-CoA + acetyl-CoA = a 3-oxoacyl-CoA + CoA. Its pathway is lipid metabolism; fatty acid beta-oxidation. In terms of biological role, catalyzes the final step of fatty acid oxidation in which acetyl-CoA is released and the CoA ester of a fatty acid two carbons shorter is formed. In Shewanella sediminis (strain HAW-EB3), this protein is 3-ketoacyl-CoA thiolase.